A 387-amino-acid chain; its full sequence is Succinate--CoA ligase [ADP-forming] subunit beta (387 aa).

Residues Lys-46, 53-55 (GRG), Glu-99, Cys-102, and Glu-107 contribute to the ATP site. Residues Asn-196 and Asp-210 each coordinate Mg(2+). Substrate contacts are provided by residues Asn-261 and 318–320 (GIV).

It belongs to the succinate/malate CoA ligase beta subunit family. Heterotetramer of two alpha and two beta subunits. Mg(2+) is required as a cofactor.

The enzyme catalyses succinate + ATP + CoA = succinyl-CoA + ADP + phosphate. The catalysed reaction is GTP + succinate + CoA = succinyl-CoA + GDP + phosphate. The protein operates within carbohydrate metabolism; tricarboxylic acid cycle; succinate from succinyl-CoA (ligase route): step 1/1. Functionally, succinyl-CoA synthetase functions in the citric acid cycle (TCA), coupling the hydrolysis of succinyl-CoA to the synthesis of either ATP or GTP and thus represents the only step of substrate-level phosphorylation in the TCA. The beta subunit provides nucleotide specificity of the enzyme and binds the substrate succinate, while the binding sites for coenzyme A and phosphate are found in the alpha subunit. This is Succinate--CoA ligase [ADP-forming] subunit beta from Campylobacter hominis (strain ATCC BAA-381 / DSM 21671 / CCUG 45161 / LMG 19568 / NCTC 13146 / CH001A).